Here is a 297-residue protein sequence, read N- to C-terminus: DNA processing protein DprA (297 aa).

Belongs to the DprA/Smf family. As to quaternary structure, interacts with RecA. Interacts with ComFA and ComFC.

Its subcellular location is the cytoplasm. Its function is as follows. Protein that helps load RecA onto ssDNA during transformation. Binds cooperatively to circular ssDNA, is able to bridge different segments of DNA. Favors the loading of RecA onto SsbA- or SsbB-coated ssDNA and formation of RecA-DNA filaments. RecA-ATP cannot catalyze homologous DNA strand exchange; SsbA and DprA activate strand exchange by RecA-ATP. In Bacillus subtilis (strain 168), this protein is DNA processing protein DprA.